The chain runs to 602 residues: Potassium-transporting ATPase potassium-binding subunit (602 aa).

The next 4 helical transmembrane spans lie at 5–25 (AMLQ…PLGA), 65–85 (GYAV…YALQ), 136–156 (GLTV…IALI), and 179–199 (LYVL…QGAI). The tract at residues 221–248 (QDAKGNPVLGKDGKPVMEDKTSQTQTLP) is disordered. The segment covering 231 to 241 (KDGKPVMEDKT) has biased composition (basic and acidic residues). Helical transmembrane passes span 283 to 303 (LANF…CFLF), 312 to 332 (QGWA…VVET), 419 to 439 (GLYG…LMVG), 458 to 478 (AITI…AVSL), 523 to 543 (IMTG…ILAI), and 566 to 586 (LFVT…YVPA).

This sequence belongs to the KdpA family. In terms of assembly, the system is composed of three essential subunits: KdpA, KdpB and KdpC.

It is found in the cell inner membrane. In terms of biological role, part of the high-affinity ATP-driven potassium transport (or Kdp) system, which catalyzes the hydrolysis of ATP coupled with the electrogenic transport of potassium into the cytoplasm. This subunit binds the periplasmic potassium ions and delivers the ions to the membrane domain of KdpB through an intramembrane tunnel. The sequence is that of Potassium-transporting ATPase potassium-binding subunit from Chromobacterium violaceum (strain ATCC 12472 / DSM 30191 / JCM 1249 / CCUG 213 / NBRC 12614 / NCIMB 9131 / NCTC 9757 / MK).